Consider the following 70-residue polypeptide: Protein SlyX homolog (70 aa).

The protein belongs to the SlyX family.

This is Protein SlyX homolog from Rhizobium meliloti (strain 1021) (Ensifer meliloti).